The chain runs to 245 residues: Thiopurine S-methyltransferase (245 aa).

29 to 40 (WREKWVDGKIGF) contacts S-adenosyl-L-methionine. Phe-40 is a binding site for substrate. At Lys-58 the chain carries N6-acetyllysine. Residues Leu-69, Glu-90, and Arg-152 each coordinate S-adenosyl-L-methionine.

It belongs to the class I-like SAM-binding methyltransferase superfamily. TPMT family. In terms of assembly, monomer.

It localises to the cytoplasm. The enzyme catalyses S-adenosyl-L-methionine + a thiopurine = S-adenosyl-L-homocysteine + a thiopurine S-methylether.. The polypeptide is Thiopurine S-methyltransferase (TPMT) (Panthera pardus (Leopard)).